A 421-amino-acid chain; its full sequence is Probable sugar-binding periplasmic protein (421 aa).

A signal peptide spans 1-27; sequence MHKLLKLAAMGTAACALLAGMAPVANA.

This sequence belongs to the bacterial solute-binding protein 1 family.

The protein resides in the periplasm. Part of a binding-protein-dependent transport system for a sugar. This Brucella melitensis biotype 1 (strain ATCC 23456 / CCUG 17765 / NCTC 10094 / 16M) protein is Probable sugar-binding periplasmic protein.